The chain runs to 882 residues: MAPAVARPRRGAEIRAAFLEFYESRGHQPIPSASLIPVDPTVLLTIAGMLPFKPVFLGQQERPAPRATSSQKCIRTNDIENVGRTARHHTFFEMLGNFSFGDYFKQQAIEWAWELSTEVFGLDPKNLVVSVFREDDEAEAIWRDVVGVNPKRIIRMDEADNFWASGPTGPCGPCSEIYYDFKPALGDEDIDLEDDSRFIEFYNLVFMQYSRDAEGTLTPLANKNIDTGLGLERMAQILQGVPNNYETDLIYPLIETAAGLAGVDYRQLDVKGQTSLKVIGDHSRAVTQLICDGVTASNLGRGYILRRLLRRVVRHGRLLGISKPFLVAMGEAAIALMQAAYPQLNERRELILAELQREEARFLETLERGEKLLADVLAAKPKQISGEQAFELYDTYGFPLELTEEIAEEHGLSVDLAGFEAAMEAQRQRAKAAAVSIDLTLQGAIEQMAADLEATAFRGYEALEHPSCVVALVVNGEPAQTASAGDAVQLVLDSTPFYGEGGGQVGDRGSLNGQDLIVSIESVNRQRDVSVHHGTIERGQLSVGDLVTAQVDPTCRRRAQAHHTATHLLQAALKQVVDSSISQAGSLVDFDRLRFDFHCPRAVTPAELEQLEALINGWITEAHSLEVQEMAIEAAKAAGAVAMFGEKYADVVRVVDVPGVSMELCGGTHVANTAEIGLFKIVSEAGVASGIRRIEAVAGPAVLAYLNERDVVVKQLSERFKVQPAEITARVAGLQEELKGATKALAAARSELAVAKAAALAAQAEAIGEHQLLVARLDGVDGGGLQSAAQGLADQLGDGAAVVLGGLPDPSDLGKVILVAAFGKAVVAKGQKAGQFIGGVAKLCGGGGGGRPNLAQAGGRDGAALDGALEQAKSSLQQELQG.

His-563, His-567, Cys-665, and His-669 together coordinate Zn(2+).

It belongs to the class-II aminoacyl-tRNA synthetase family. It depends on Zn(2+) as a cofactor.

It localises to the cytoplasm. It catalyses the reaction tRNA(Ala) + L-alanine + ATP = L-alanyl-tRNA(Ala) + AMP + diphosphate. Its function is as follows. Catalyzes the attachment of alanine to tRNA(Ala) in a two-step reaction: alanine is first activated by ATP to form Ala-AMP and then transferred to the acceptor end of tRNA(Ala). Also edits incorrectly charged Ser-tRNA(Ala) and Gly-tRNA(Ala) via its editing domain. The sequence is that of Alanine--tRNA ligase from Synechococcus sp. (strain RCC307).